The chain runs to 365 residues: Glutamate 5-kinase 1 (365 aa).

Residue lysine 9 participates in ATP binding. 3 residues coordinate substrate: serine 49, aspartate 136, and asparagine 148. Residues 168–169 (TD) and 210–216 (TGGMKSK) each bind ATP. Residues 276-353 (SGEIIIDAGA…DELDFEKTFE (78 aa)) form the PUA domain.

The protein belongs to the glutamate 5-kinase family.

It is found in the cytoplasm. It catalyses the reaction L-glutamate + ATP = L-glutamyl 5-phosphate + ADP. It participates in amino-acid biosynthesis; L-proline biosynthesis; L-glutamate 5-semialdehyde from L-glutamate: step 1/2. Its function is as follows. Catalyzes the transfer of a phosphate group to glutamate to form L-glutamate 5-phosphate. In Bacillus subtilis (strain 168), this protein is Glutamate 5-kinase 1.